The chain runs to 316 residues: Apolipoprotein E (316 aa).

A signal peptide spans 1–18 (MKVLWAALVVTLLAGCGA). Repeat copies occupy residues 83 to 104 (ALMDDTMKEVKACKSELEEQLG), 105 to 126 (PVTEETKARVSKELQAAQARLG), 127 to 148 (ADMEEVRSRLAQYRGELQAMVG), 149 to 170 (QSTEELRGRLSAHLRKLRKRLL), 171 to 192 (RDAEDLQRRLAVYQAGIREGAA), 193 to 214 (RSVNTLREHLGPLAEQAATVHT), 215 to 232 (LVSKPLQERAEAWAQRLR), and 233 to 254 (GRLEKAGFPVGDRLDEVREQVQ). The 8 X 22 AA approximate tandem repeats stretch occupies residues 83–254 (ALMDDTMKEV…RLDEVREQVQ (172 aa)). The interval 161-171 (HLRKLRKRLLR) is LDL and other lipoprotein receptors binding. 165–168 (LRKR) provides a ligand contact to heparin. Positions 213–289 (HTLVSKPLQE…SWFEPLVQDM (77 aa)) are lipid-binding and lipoprotein association. Residue 228-235 (AQRLRGRL) coordinates heparin. The tract at residues 265–316 (NQVRLQAEAFQGRLKSWFEPLVQDMQQKWAELVEKVQLAVGAVPTSVPSEKQ) is homooligomerization. Residues 277–289 (RLKSWFEPLVQDM) are specificity for association with VLDL.

It belongs to the apolipoprotein A1/A4/E family. In terms of assembly, homotetramer. May interact with ABCA1; functionally associated with ABCA1 in the biogenesis of HDLs. May interact with APP/A4 amyloid-beta peptide; the interaction is extremely stable in vitro but its physiological significance is unclear. May interact with MAPT. May interact with MAP2. In the cerebrospinal fluid, interacts with secreted SORL1. Interacts with PMEL; this allows the loading of PMEL luminal fragment on ILVs to induce fibril nucleation. In terms of processing, APOE exists as multiple glycosylated and sialylated glycoforms within cells and in plasma. The extent of glycosylation and sialylation are tissue and context specific. Post-translationally, glycated in plasma VLDL. Phosphorylated by FAM20C in the extracellular medium.

Its subcellular location is the secreted. The protein resides in the extracellular space. It is found in the extracellular matrix. It localises to the extracellular vesicle. The protein localises to the endosome. Its subcellular location is the multivesicular body. Functionally, APOE is an apolipoprotein, a protein associating with lipid particles, that mainly functions in lipoprotein-mediated lipid transport between organs via the plasma and interstitial fluids. APOE is a core component of plasma lipoproteins and is involved in their production, conversion and clearance. Apolipoproteins are amphipathic molecules that interact both with lipids of the lipoprotein particle core and the aqueous environment of the plasma. As such, APOE associates with chylomicrons, chylomicron remnants, very low density lipoproteins (VLDL) and intermediate density lipoproteins (IDL) but shows a preferential binding to high-density lipoproteins (HDL). It also binds a wide range of cellular receptors including the LDL receptor/LDLR and the very low-density lipoprotein receptor/VLDLR that mediate the cellular uptake of the APOE-containing lipoprotein particles. Finally, APOE also has a heparin-binding activity and binds heparan-sulfate proteoglycans on the surface of cells, a property that supports the capture and the receptor-mediated uptake of APOE-containing lipoproteins by cells. The sequence is that of Apolipoprotein E (APOE) from Diceros bicornis (Black rhinoceros).